Here is a 569-residue protein sequence, read N- to C-terminus: Vacuolar protein sorting-associated protein 45 homolog (569 aa).

It belongs to the STXBP/unc-18/SEC1 family. In terms of assembly, interacts with both SYP41 or SYP42 and VTI12, but in different domains of the trans-Golgi network. Does not interact on the pervacuolar compartment with VTI11, SYP21 or SYP22, or on the cis-Golgi with SYP31. Interacts at the trans-Golgi network (TGN) with the SYP41/SYP61/VTI12 SNARE complex. As to expression, highly expressed in roots, lower expression in leaves, stems and flowers.

The protein resides in the golgi apparatus. Its subcellular location is the trans-Golgi network membrane. It localises to the early endosome. In terms of biological role, involved in the protein transport to the vacuole, probably at the level of vesicle fusion at the trans-Golgi network (TGN) and not in transport from the TGN to the prevacuolar compartment, by promoting the recycling of vacuolar sorting receptors back to the TGN. Involved in early endosomal vesicle trafficking, particularly at the trans-Golgi-network/early endosome (TGN/EE) thus residing in early endocytic route. Together with BIG5/BEN1 required for polar PIN-FORMED (PIN) proteins localization, for their dynamic repolarization, and consequently for auxin activity gradient formation and auxin-related developmental processes (e.g. embryonic patterning, organogenesis and vasculature venation patterning). Necessary for pollen germination and for cell expansion. Binds syntaxins. The protein is Vacuolar protein sorting-associated protein 45 homolog of Arabidopsis thaliana (Mouse-ear cress).